A 382-amino-acid chain; its full sequence is Serine/threonine-protein kinase US3 homolog (382 aa).

Residues 1 to 10 are compositionally biased toward basic and acidic residues; it reads MENKQCDHLT. Residues 1-75 are disordered; that stretch reads MENKQCDHLT…ASESDEDDDD (75 aa). Over residues 12-24 the composition is skewed to polar residues; it reads WFSTTSDASESMD. The span at 45-75 shows a compositional bias: acidic residues; the sequence is ADEDLYSDISEGDLEYSDCDSASESDEDDDD. One can recognise a Protein kinase domain in the interval 93 to 379; it reads YTVIKTLTPG…AEELLSYPMF (287 aa). ATP contacts are provided by residues 99–107 and K122; that span reads LTPGSEGRV. The active-site Proton acceptor is D207.

The protein belongs to the protein kinase superfamily. Ser/Thr protein kinase family. In terms of processing, phosphorylated by protein 49; this phosphorylation regulates subsequent phosphorylation of proteins 26 and 29 by US3 homolog. Autophosphorylated.

It localises to the host cytoplasm. The protein resides in the host nucleus. It catalyses the reaction L-seryl-[protein] + ATP = O-phospho-L-seryl-[protein] + ADP + H(+). The enzyme catalyses L-threonyl-[protein] + ATP = O-phospho-L-threonyl-[protein] + ADP + H(+). Its function is as follows. Multifunctional serine/threonine kinase that plays a role in several processes including egress of virus particles from the nucleus, modulation of the actin cytoskeleton and inhibition of apoptosis. Phosphorylates protein 26 and 29, two critical regulators of capsid budding from nucleus to endoplasmic reticulum, thereby facilitating virion egress. Modulates and redistributes host components of the nuclear envelope, including LMNA, emerin/EMD and the nuclear matrix protein MATR3. Phosphorylates envelope glycoprotein B (gB), probably to direct it to the cell surface. Promotes virus intracellular spread by restructuring host cell cytoskeleton. Blocks host apoptosis to extend cell survival and allow efficient viral replication. Promotes viral gene expression by phosphorylating host HDAC2 to reduce viral genome silencing. The polypeptide is Serine/threonine-protein kinase US3 homolog (Equine herpesvirus 1 (strain Ab4p) (EHV-1)).